The sequence spans 286 residues: tRNA(Ile)-lysidine synthase (286 aa).

7–12 (SGGPDS) lines the ATP pocket.

It belongs to the tRNA(Ile)-lysidine synthase family.

It is found in the cytoplasm. It catalyses the reaction cytidine(34) in tRNA(Ile2) + L-lysine + ATP = lysidine(34) in tRNA(Ile2) + AMP + diphosphate + H(+). Functionally, ligates lysine onto the cytidine present at position 34 of the AUA codon-specific tRNA(Ile) that contains the anticodon CAU, in an ATP-dependent manner. Cytidine is converted to lysidine, thus changing the amino acid specificity of the tRNA from methionine to isoleucine. This chain is tRNA(Ile)-lysidine synthase, found in Mycoplasmopsis pulmonis (strain UAB CTIP) (Mycoplasma pulmonis).